Reading from the N-terminus, the 162-residue chain is Phosphopantetheine adenylyltransferase (162 aa).

Thr-14 is a binding site for substrate. Residues 14-15 (TF) and His-22 each bind ATP. Lys-46, Leu-78, and Arg-92 together coordinate substrate. ATP is bound by residues 93-95 (GLR), Glu-103, and 128-134 (HSFISSS).

It belongs to the bacterial CoaD family. Homohexamer. Mg(2+) is required as a cofactor.

The protein localises to the cytoplasm. The enzyme catalyses (R)-4'-phosphopantetheine + ATP + H(+) = 3'-dephospho-CoA + diphosphate. The protein operates within cofactor biosynthesis; coenzyme A biosynthesis; CoA from (R)-pantothenate: step 4/5. In terms of biological role, reversibly transfers an adenylyl group from ATP to 4'-phosphopantetheine, yielding dephospho-CoA (dPCoA) and pyrophosphate. The protein is Phosphopantetheine adenylyltransferase of Xylella fastidiosa (strain 9a5c).